The sequence spans 165 residues: Putative universal stress protein SH1215 (165 aa).

The protein belongs to the universal stress protein A family.

It localises to the cytoplasm. This is Putative universal stress protein SH1215 from Staphylococcus haemolyticus (strain JCSC1435).